Consider the following 291-residue polypeptide: uncharacterized protein (291 aa).

This is an uncharacterized protein from Haemophilus influenzae (strain ATCC 51907 / DSM 11121 / KW20 / Rd).